The sequence spans 504 residues: Amidophosphoribosyltransferase (504 aa).

C2 (nucleophile) is an active-site residue. Residues C2–E235 form the Glutamine amidotransferase type-2 domain. 3 residues coordinate Mg(2+): T305, D367, and D368.

The protein in the C-terminal section; belongs to the purine/pyrimidine phosphoribosyltransferase family. Mg(2+) serves as cofactor.

It carries out the reaction 5-phospho-beta-D-ribosylamine + L-glutamate + diphosphate = 5-phospho-alpha-D-ribose 1-diphosphate + L-glutamine + H2O. The protein operates within purine metabolism; IMP biosynthesis via de novo pathway; N(1)-(5-phospho-D-ribosyl)glycinamide from 5-phospho-alpha-D-ribose 1-diphosphate: step 1/2. Functionally, catalyzes the formation of phosphoribosylamine from phosphoribosylpyrophosphate (PRPP) and glutamine. This Pasteurella multocida (strain Pm70) protein is Amidophosphoribosyltransferase.